The sequence spans 210 residues: Uracil phosphoribosyltransferase (210 aa).

5-phospho-alpha-D-ribose 1-diphosphate is bound by residues R78, R103, and 130–138 (DPMLATGGT). Uracil contacts are provided by residues I193 and 198 to 200 (GDA). 5-phospho-alpha-D-ribose 1-diphosphate is bound at residue D199.

It belongs to the UPRTase family. It depends on Mg(2+) as a cofactor.

It carries out the reaction UMP + diphosphate = 5-phospho-alpha-D-ribose 1-diphosphate + uracil. Its pathway is pyrimidine metabolism; UMP biosynthesis via salvage pathway; UMP from uracil: step 1/1. With respect to regulation, allosterically activated by GTP. Functionally, catalyzes the conversion of uracil and 5-phospho-alpha-D-ribose 1-diphosphate (PRPP) to UMP and diphosphate. In Stenotrophomonas maltophilia (strain R551-3), this protein is Uracil phosphoribosyltransferase.